The primary structure comprises 119 residues: Holo-[acyl-carrier-protein] synthase (119 aa).

Mg(2+)-binding residues include Asp-8 and Glu-58.

It belongs to the P-Pant transferase superfamily. AcpS family. Mg(2+) serves as cofactor.

Its subcellular location is the cytoplasm. The enzyme catalyses apo-[ACP] + CoA = holo-[ACP] + adenosine 3',5'-bisphosphate + H(+). Its function is as follows. Transfers the 4'-phosphopantetheine moiety from coenzyme A to a Ser of acyl-carrier-protein. This Streptococcus mutans serotype c (strain ATCC 700610 / UA159) protein is Holo-[acyl-carrier-protein] synthase.